The chain runs to 961 residues: Cytochrome b5-like reductase apf12 (961 aa).

Residue A298 coordinates FAD. Positions 429-548 constitute an FAD-binding FR-type domain; that stretch reads ARPQVDAFAW…IKPAPHFRIA (120 aa). NADP(+) contacts are provided by residues 453–456, 499–500, and G753; these read SRIQ and SK. One can recognise a Cytochrome b5 heme-binding domain in the interval 716 to 793; that stretch reads LNQITKLELA…LNEMVIGRLD (78 aa). Position 753–755 (753–755) interacts with FAD; that stretch reads GGE.

It belongs to the flavoprotein pyridine nucleotide cytochrome reductase family. It depends on FAD as a cofactor.

It participates in secondary metabolite biosynthesis. Functionally, cytochrome b5-like reductase; part of the gene cluster that mediates the biosynthesis of the cyclic tetrapeptide apicidin F (APF). The non-ribosomal peptide synthetase apf1 incorporates four different amino acids to produce apicidin F: L-phenylalanine, D-pipecolic acid (D-pip), N-methoxy-L-tryptophan and L-2-aminooctanedioic acid. L-Phenylalanine is the only proteinogenic amino acid directly used by apf1. The 3 other apf1 substrates are non-proteinogenic and have to be modified by other enzymes of the cluster. Lysine is converted to delta-1-pyrroline-5-carboxylate (P5C) which is reduced to L-pipecolic acid (L-pip) by apf3. L-pip is epimerized to D-pip, probably by apf1 activity, prior to incorporation. L-Tryptophan is N-oxidyzed by one of the cytochrome P450 monooxygenases (apf7 or apf8), and further methylated at the hydroxy group by the O-methyltransferase apf6 to yield N-methoxy-L-tryptophan. The synthesis of the fourth apf1 substrate is more complex. The fatty acid synthase apf5 is involved in the synthesis of the octanoic acid backbone of L-2-aminooctanedioic acid by fixing one acetyl-CoA unit and three malonyl-CoA units. Then one of the cytochrome P450 monooxygenases (apf7 or apf8) may oxidize this backbone to 2-oxooctanoic acid. The aminotransferase apf4 is predicted to catalyze the exchange of the keto group with an amino group. The next step would be the oxidation of 2-aminooctanoic acid by one of the cytochrome P450 monooxygenases (apf7 or apf8). The last step is the oxidation of 2-amino-8-hydroxyoctanoic acid to 2-aminooctanedioic acid is catalyzed by the FAD-dependent monooxygenase apf9. This is Cytochrome b5-like reductase apf12 from Gibberella fujikuroi (strain CBS 195.34 / IMI 58289 / NRRL A-6831) (Bakanae and foot rot disease fungus).